Consider the following 111-residue polypeptide: Small ribosomal subunit protein bS16 (111 aa).

A disordered region spans residues 92–111 (MEVKAKNRKARPSKKEDKEA).

It belongs to the bacterial ribosomal protein bS16 family.

The polypeptide is Small ribosomal subunit protein bS16 (Rickettsia massiliae (strain Mtu5)).